A 2498-amino-acid chain; its full sequence is PKS-NRPS hybrid synthetase acdB (2498 aa).

The adenylation (A) domain stretch occupies residues 34-427 (FEQAAHAHFD…GRADSQVKIR (394 aa)). The 76-residue stretch at 531–606 (QPATELERDI…SLAGYLMDMD (76 aa)) folds into the Carrier 1 domain. Ser-566 carries the O-(pantetheine 4'-phosphoryl)serine modification. The Ketosynthase family 3 (KS3) domain maps to 627–1058 (SDDIAVVSMA…GTNAHVIVEE (432 aa)). Active-site for beta-ketoacyl synthase activity residues include Cys-802, His-938, and His-979. A malonyl-CoA:ACP transacylase (MAT) domain region spans residues 1165-1485 (LFAGQGSQQL…EILARLHVQH (321 aa)). Residues 1739–1917 (GAVLITGGLS…PAVCVAYGPL (179 aa)) are ketoreductase (KR) domain. One can recognise a Carrier 2 domain in the interval 2017–2092 (EILLRTIQEA…ELSRYLLPQL (76 aa)). Ser-2052 bears the O-(pantetheine 4'-phosphoryl)serine mark. Residues 2149–2378 (VTGATEFVGA…FPVDYVCRTI (230 aa)) are thioester reductase (TE) domain.

This sequence in the C-terminal section; belongs to the NRP synthetase family. Pantetheine 4'-phosphate is required as a cofactor.

It functions in the pathway secondary metabolite biosynthesis. PKS-NRPS hybrid synthetase; part of the gene cluster that mediates the biosynthesis of aspcandine, a pyrrolobenzazepine alkaloid. Initially, the indoleamine 2,3-dioxygenase acdA accepts L-tryptophan and performs the oxidative opening of the indole ring to yield N'-formyl-L-kynurenine, which undergoes the spontaneous deformylation reaction to provide L-kynurenine. The kynurenine 3-monooxygenase acdD then hydroxylates L-kynurenine to afford 3-hydroxy-L-kynurenine. 3-hydroxy-L-kynurenine is activated by the A domain of the NRPS-PKS acdB and subsequently loaded onto the enzyme. The KS domain conducts the decarboxylative condensation of the 3-hydroxy-L-kynurenyl and malonyl moieties, and subsequent nucleophilic attacks by the two amino groups would occur nonenzymatically at two distinct positions, achieving the chain release and the construction of the tricyclic system. Finally, a dehydration reaction completes the biosynthesis to yield aspcandine. The protein is PKS-NRPS hybrid synthetase acdB of Aspergillus candidus.